Reading from the N-terminus, the 349-residue chain is MELLESALAKIQPVDEALLAQAQAKLDNKTKPPGSLGLLEEMARRFAAITGDLSPKMGKKVVFTFAGDHGIVEEGVSLYPKEVTPQMVLNFLRGGAGVNVLARHAGAEVRVVDVGVDYDFEPTEGLIIRKIAKGTRNFAKESAMTREEAVAAIEVGIALADRAKAEGISMVGTGEMGIGNTSPSSAIIAAFAGCSVREVTHRGTGIGDQALEHKIKVIQAGLDLNRPNPEDPLDVLAKVGGLEIAGIAGLVLGAAANRIPVVVDGFISTAGALIACELHPNVREYIFAAHNSVEIGHQMMLQRIGAKPILDLQLRLGEGTGAALAMGLIEASVKVLNEMATFEEAGVTS.

Glu-318 acts as the Proton acceptor in catalysis.

The protein belongs to the CobT family.

It carries out the reaction 5,6-dimethylbenzimidazole + nicotinate beta-D-ribonucleotide = alpha-ribazole 5'-phosphate + nicotinate + H(+). Its pathway is nucleoside biosynthesis; alpha-ribazole biosynthesis; alpha-ribazole from 5,6-dimethylbenzimidazole: step 1/2. Its function is as follows. Catalyzes the synthesis of alpha-ribazole-5'-phosphate from nicotinate mononucleotide (NAMN) and 5,6-dimethylbenzimidazole (DMB). This chain is Nicotinate-nucleotide--dimethylbenzimidazole phosphoribosyltransferase, found in Geobacter sp. (strain M21).